The chain runs to 716 residues: Protein C-mannosyl-transferase DPY19L3 (716 aa).

Topologically, residues 1–43 are cytoplasmic; sequence MMSIRQRREIRATEVSEDFPAQEENVKLENKLPSGCTSRRLWK. Residues 44–64 traverse the membrane as a helical segment; that stretch reads ILSLTIGGTIALCIGLLTSVY. The Lumenal segment spans residues 65–154; the sequence is LATLHENDLW…RVLPVQKYLE (90 aa). Asn-118 is a glycosylation site (N-linked (GlcNAc...) asparagine). Residues 155–182 form a helical membrane-spanning segment; that stretch reads PVYFYIYTLFGLQAIYVTALYITSWLLS. Residues 183–184 are Cytoplasmic-facing; the sequence is GT. Positions 185 to 197 form an intramembrane region, name=3; sequence WLSGLLAAFWYVT. Residues 198-215 lie on the Cytoplasmic side of the membrane; that stretch reads NRIDTTRVEFTIPLRENW. Residues 216–230 constitute an intramembrane region (name=4); sequence ALPFFAIQIAAITYF. At 231-239 the chain is on the cytoplasmic side; it reads LRPNLQPLS. The chain crosses the membrane as a helical span at residues 240–256; it reads ERLTLLAIFISTFLFSL. The Lumenal portion of the chain corresponds to 257–262; the sequence is TWQFNQ. Residues 263–279 form a helical membrane-spanning segment; the sequence is FMMLMQALVLFTLDSLD. Residues 280–289 lie on the Cytoplasmic side of the membrane; sequence MLPAVKATWL. A helical membrane pass occupies residues 290–306; sequence YGIQITSLLLVCILQFF. Over 307–308 the chain is Lumenal; it reads NS. The helical transmembrane segment at 309–323 threads the bilayer; that stretch reads MILGSLLISFNLSVF. The Cytoplasmic segment spans residues 324 to 338; the sequence is IARKLQKNLKTGSFL. A helical transmembrane segment spans residues 339–359; it reads NRLGKLLLHLFMVLCLTLFLN. Over 360 to 414 the chain is Lumenal; the sequence is NIIKKILNLKSDEHIFKFLKAKFGLGATRDFDANLYLCEEAFGLLPFNTFGRLSD. A helical transmembrane segment spans residues 415 to 437; the sequence is TLLFYAYIFVLSITVIVAFVVAF. Residues 438-465 are Cytoplasmic-facing; it reads HNLSDSTNQQSVGKMEKGTVDLKPETAY. A helical membrane pass occupies residues 466–485; the sequence is NLIHTILFGFLALSTMRMKY. Residues 486–487 lie on the Lumenal side of the membrane; the sequence is LW. The chain crosses the membrane as a helical span at residues 488 to 499; the sequence is TSHMCVFASFGL. Over 500–522 the chain is Cytoplasmic; that stretch reads CSPEIWELLLKSVHLYNPKRICI. The chain crosses the membrane as a helical span at residues 523-539; that stretch reads MRYSVPILILLYLCYKF. Residues 540-716 lie on the Lumenal side of the membrane; it reads WPGMMDELSE…FHVYKLSRNK (177 aa). The N-linked (GlcNAc...) asparagine glycan is linked to Asn-704.

Belongs to the dpy-19 family.

The protein localises to the endoplasmic reticulum membrane. The enzyme catalyses L-tryptophyl-[protein] + a di-trans,poly-cis-dolichyl beta-D-mannosyl phosphate = C-alpha-D-mannosyl-L-tryptophyl-[protein] + a di-trans,poly-cis-dolichyl phosphate + H(+). The protein operates within protein modification; protein glycosylation. C-mannosyltransferase that mediates C-mannosylation of tryptophan residues on target proteins. The reaction occurs on the luminal side of the endoplasmic reticulum and involves the transfer of a mannose unit from a dolichylphosphate mannose (Dol-P-Man) donor to an acceptor protein containing a WxxW or WxxC consensus sequence. C-mannosylates RSPO1, a Wnt signaling regulator, preferentially at the first Trp residue in the sequence WxxW. C-mannosylates the netrin receptor UNC5A, preferentially at the third tryptophan of WxxWxxWxxC sequence. This is Protein C-mannosyl-transferase DPY19L3 (DPY19L3) from Pongo abelii (Sumatran orangutan).